The sequence spans 25 residues: Endoglucanase 1 (25 aa).

Residues Tyr1 to Lys25 are disordered. Residues Gln10–Lys25 are compositionally biased toward polar residues.

It catalyses the reaction Endohydrolysis of (1-&gt;4)-beta-D-glucosidic linkages in cellulose, lichenin and cereal beta-D-glucans.. This enzyme hydrolyzes cellotetraose, cellopentaose, and cellohexaose to cellobiose and cellotriose but does not hydrolyze cellobiose or cellotriose. This is Endoglucanase 1 from Ruminiclostridium josui (Clostridium josui).